We begin with the raw amino-acid sequence, 317 residues long: Ribosomal RNA small subunit methyltransferase A (317 aa).

S-adenosyl-L-methionine-binding residues include N37, V39, G64, E85, D115, and N134. The disordered stretch occupies residues 293 to 317 (GGSDEATSTGRDARAPDISGHASAS).

This sequence belongs to the class I-like SAM-binding methyltransferase superfamily. rRNA adenine N(6)-methyltransferase family. RsmA subfamily.

It is found in the cytoplasm. It catalyses the reaction adenosine(1518)/adenosine(1519) in 16S rRNA + 4 S-adenosyl-L-methionine = N(6)-dimethyladenosine(1518)/N(6)-dimethyladenosine(1519) in 16S rRNA + 4 S-adenosyl-L-homocysteine + 4 H(+). In terms of biological role, specifically dimethylates two adjacent adenosines (A1518 and A1519) in the loop of a conserved hairpin near the 3'-end of 16S rRNA in the 30S particle. May play a critical role in biogenesis of 30S subunits. This Mycobacterium bovis (strain BCG / Tokyo 172 / ATCC 35737 / TMC 1019) protein is Ribosomal RNA small subunit methyltransferase A.